Consider the following 857-residue polypeptide: Bifunctional levopimaradiene synthase, chloroplastic (857 aa).

The N-terminal 33 residues, 1–33 (MALPSSSLSSQIHTGATTQCIPHFHGSLNAGTS), are a transit peptide targeting the chloroplast. K257 contributes to the substrate binding site. 2 residues coordinate Mg(2+): D390 and D392. Positions 390–393 (DIDD) match the DXDD motif motif. K477 is a binding site for substrate. Residues D609, D613, N753, T757, and E761 each coordinate Mg(2+). The DDXXD motif motif lies at 609-613 (DDLYD).

This sequence belongs to the terpene synthase family. Tpsd subfamily. It depends on Mg(2+) as a cofactor.

The protein localises to the plastid. The protein resides in the chloroplast. It carries out the reaction (2E,6E,10E)-geranylgeranyl diphosphate = (+)-copalyl diphosphate. The catalysed reaction is (+)-copalyl diphosphate = abieta-7,13-diene + diphosphate. It catalyses the reaction (+)-copalyl diphosphate = abieta-8(14),12-diene + diphosphate. The enzyme catalyses (+)-copalyl diphosphate = neoabietadiene + diphosphate. It participates in terpene metabolism; oleoresin biosynthesis. Its function is as follows. Involved in defensive oleoresin formation in conifers in response to insect attack or other injury. Involved in diterpene (C20) olefins biosynthesis. Bifunctional enzyme that catalyzes two sequential cyclizations of geranylgeranyl diphosphate (GGPP) to levopimaradiene. Levopimaradiene is the major products of the enzyme with abietadiene and neoabietadiene. No activity with farnesyl diphosphate (FPP) as substrate. The chain is Bifunctional levopimaradiene synthase, chloroplastic from Pinus banksiana (Jack pine).